We begin with the raw amino-acid sequence, 293 residues long: Elongation factor Ts (293 aa).

The tract at residues 80–83 is involved in Mg(2+) ion dislocation from EF-Tu; sequence TDFV.

This sequence belongs to the EF-Ts family.

The protein localises to the cytoplasm. Its function is as follows. Associates with the EF-Tu.GDP complex and induces the exchange of GDP to GTP. It remains bound to the aminoacyl-tRNA.EF-Tu.GTP complex up to the GTP hydrolysis stage on the ribosome. The protein is Elongation factor Ts of Paraburkholderia phytofirmans (strain DSM 17436 / LMG 22146 / PsJN) (Burkholderia phytofirmans).